Reading from the N-terminus, the 172-residue chain is Adenine phosphoribosyltransferase (172 aa).

It belongs to the purine/pyrimidine phosphoribosyltransferase family. Homodimer.

It localises to the cytoplasm. The enzyme catalyses AMP + diphosphate = 5-phospho-alpha-D-ribose 1-diphosphate + adenine. The protein operates within purine metabolism; AMP biosynthesis via salvage pathway; AMP from adenine: step 1/1. Functionally, catalyzes a salvage reaction resulting in the formation of AMP, that is energically less costly than de novo synthesis. In Clostridium beijerinckii (strain ATCC 51743 / NCIMB 8052) (Clostridium acetobutylicum), this protein is Adenine phosphoribosyltransferase.